Reading from the N-terminus, the 145-residue chain is MTRVIVEAVVKPSEDKDKVINAIRNFFDFDKIREEEHGMEKLLIAESNSLTSLLKLHRLLREQRILDAARKYLMKSIVGSRITFMLNKQVAAIGKLSFIDKEHESPLGPIKVTIDYKDPVIVVDWLTPKTAKGVPLWENAIPPEE.

This sequence belongs to the UPF0201 family.

The polypeptide is UPF0201 protein Saci_1285 (Sulfolobus acidocaldarius (strain ATCC 33909 / DSM 639 / JCM 8929 / NBRC 15157 / NCIMB 11770)).